The following is a 483-amino-acid chain: Regulatory protein ViaA (483 aa).

The protein belongs to the ViaA family. In terms of assembly, homodimer. Interacts with RavA.

The protein localises to the cytoplasm. Component of the RavA-ViaA chaperone complex, which may act on the membrane to optimize the function of some of the respiratory chains. ViaA stimulates the ATPase activity of RavA. This chain is Regulatory protein ViaA, found in Shigella flexneri.